The primary structure comprises 130 residues: 3-aminoacrylate deaminase RutC (130 aa).

The protein belongs to the RutC family.

The enzyme catalyses (Z)-3-aminoacrylate + H2O + H(+) = 3-oxopropanoate + NH4(+). Involved in pyrimidine catabolism. Catalyzes the deamination of 3-aminoacrylate to malonic semialdehyde, a reaction that can also occur spontaneously. RutC may facilitate the reaction and modulate the metabolic fitness, rather than catalyzing essential functions. This is 3-aminoacrylate deaminase RutC from Klebsiella pneumoniae (strain 342).